Here is a 211-residue protein sequence, read N- to C-terminus: Arginine exporter protein ArgO (211 aa).

6 helical membrane-spanning segments follow: residues 1–21 (MISYYFQGLALGAAMILPLGP), 37–57 (LMIALLCALSDLVLISAGIFG), 68–88 (LLALVTWGGVAFLLWYGFGAL), 111–131 (IIATMLAVTWLNPHVYLDTFV), 147–167 (WFALGTISASFLWFFGLALLA), and 179–199 (AQRIINILVGVVMWLIAFQLA).

This sequence belongs to the LysE/ArgO transporter (TC 2.A.75) family.

The protein resides in the cell inner membrane. It carries out the reaction L-arginine(in) = L-arginine(out). Involved in the export of arginine. Important to control the intracellular level of arginine and the correct balance between arginine and lysine. The polypeptide is Arginine exporter protein ArgO (Salmonella schwarzengrund (strain CVM19633)).